A 127-amino-acid chain; its full sequence is MFRTMMNGKIHRATVTEANLNYVGSITIDSAILEAVDMLPNEKVQIVNNNNGARIETYIIPGEPGSGVICLNGAAARHVQVGDVVIIMSYGMFTTEEANKHEPKIVVLDEKNHIEMILPEEKTHTTL.

S25 functions as the Schiff-base intermediate with substrate; via pyruvic acid in the catalytic mechanism. Position 25 is a pyruvic acid (Ser) (S25). T57 serves as a coordination point for substrate. The active-site Proton donor is the Y58. 73–75 (GAA) contributes to the substrate binding site.

The protein belongs to the PanD family. Heterooctamer of four alpha and four beta subunits. The cofactor is pyruvate. In terms of processing, is synthesized initially as an inactive proenzyme, which is activated by self-cleavage at a specific serine bond to produce a beta-subunit with a hydroxyl group at its C-terminus and an alpha-subunit with a pyruvoyl group at its N-terminus.

It is found in the cytoplasm. It catalyses the reaction L-aspartate + H(+) = beta-alanine + CO2. The protein operates within cofactor biosynthesis; (R)-pantothenate biosynthesis; beta-alanine from L-aspartate: step 1/1. Functionally, catalyzes the pyruvoyl-dependent decarboxylation of aspartate to produce beta-alanine. This chain is Aspartate 1-decarboxylase, found in Listeria welshimeri serovar 6b (strain ATCC 35897 / DSM 20650 / CCUG 15529 / CIP 8149 / NCTC 11857 / SLCC 5334 / V8).